A 760-amino-acid chain; its full sequence is Protein HEADING DATE 3B (760 aa).

Composition is skewed to gly residues over residues 1–12 and 60–70; these read MATRGGGGGGGG and SGGGGGGGVGG. Disordered stretches follow at residues 1–120, 144–169, 236–262, and 285–346; these read MATR…KINK, SRSTAEAPQRRAENTIKSSSGKRLAD, VKSRTPLKDKEMEAAQTSKNVEVEKSS, and TGII…IEET. Over residues 71-87 the composition is skewed to low complexity; the sequence is SPAHSTSAASQSQSQSQ. Over residues 94 to 107 the composition is skewed to polar residues; sequence SLFQPFNVPSNRPG. Positions 108 to 120 are enriched in basic and acidic residues; that stretch reads HSTEKINSDKINK. Positions 236 to 248 are enriched in basic and acidic residues; it reads VKSRTPLKDKEME. A Nuclear localization signal motif is present at residues 349–355; sequence KRKRLLE. Disordered regions lie at residues 485 to 543 and 707 to 760; these read LQQP…GVQL and FPTV…QRDD. Polar residues-rich tracts occupy residues 511 to 522, 531 to 543, and 707 to 730; these read QRDQAATNGVSK, ASDNKQNNWGVQL, and FPTVSAQNNQPQPSYSSRDNQTNV.

As to expression, expressed in mesophyll cells of young leaves, anthers, stigmas and the top of lemmas.

It is found in the nucleus. Functionally, involved in the regulation of flowering time under short day (SD) and long day (LD) conditions. Functions as a floral promoter by negatively regulating GHD7, a repressor of the photoperiodic control of flowering. Acts as a floral activator in the LD photoperiodic pathway. Involved in blue light-induced activation of EHD1 expression to promote flowering under SD conditions. The polypeptide is Protein HEADING DATE 3B (HD3B) (Oryza sativa subsp. japonica (Rice)).